The following is a 389-amino-acid chain: MRCRKCQLCLSALLTLLGLKVYIEWTSESWLKKAEPRGALPSPTPPNAEPTLPTNLSARLGQTGPLSSAYWNQQQRQLGVLPSTDCQTWGTVAASEILDFILYPQELRRFLLSAACRSFPLWLPAGEGSPVASCSDKDVPYLLLAVKSEPGHFAARQAVRETWGSPVAGTRLLFLLGSPLGMGGPDLRSLVTWESRRYGDLLLWDFLDVPYNRTLKDLLLLTWLSHHCPDVNFVLQVQDDAFVHIPALLEHLQTLPPTWARSLYLGEIFTQAKPLRKPGGPFYVPKTFFEGDYPAYASGGGYVISGRLAPWLLQAAARVAPFPFDDVYTGFCFRALGLAPRAHPGFLTAWPAERTRDPCAVRGLLLVHPVSPQDTIWLWRHLWVPELQC.

Topologically, residues 1-7 (MRCRKCQ) are cytoplasmic. Residues 8-24 (LCLSALLTLLGLKVYIE) traverse the membrane as a helical; Signal-anchor for type II membrane protein segment. The Lumenal portion of the chain corresponds to 25–389 (WTSESWLKKA…RHLWVPELQC (365 aa)). The disordered stretch occupies residues 36-57 (PRGALPSPTPPNAEPTLPTNLS). Asn-55 and Asn-212 each carry an N-linked (GlcNAc...) asparagine glycan.

Belongs to the glycosyltransferase 31 family. As to quaternary structure, interacts with B3GNT2; this interaction greatly increases B3GNT2 catalytic activity, independently of B3GNT8 enzymatic activity.

It localises to the golgi apparatus membrane. It participates in protein modification; protein glycosylation. Beta-1,3-N-acetylglucosaminyltransferase that plays a role in the elongation of specific branch structures of multiantennary N-glycans. Has strong activity towards tetraantennary N-glycans and 2,6 triantennary glycans. The polypeptide is UDP-GlcNAc:betaGal beta-1,3-N-acetylglucosaminyltransferase 8 (Mus musculus (Mouse)).